The sequence spans 487 residues: Rhoptry apical surface protein 1 (487 aa).

The segment at 337 to 487 (EVAMSGRGGH…EEEQPLLFTQ (151 aa)) is disordered. Basic and acidic residues-rich tracts occupy residues 385–399 (DGIRGRSPRGSDRRA) and 454–475 (EKNEEASEADERPRERTEGVEY).

As to quaternary structure, interacts with RASP2.

The protein resides in the cytoplasmic vesicle. The protein localises to the secretory vesicle. It is found in the rhoptry membrane. This is Rhoptry apical surface protein 1 from Toxoplasma gondii (strain ATCC 50853 / GT1).